Reading from the N-terminus, the 225-residue chain is Single-pass membrane and coiled-coil domain-containing protein 3 (225 aa).

Residues 69–92 (IIQAMTKIQKELQKIDEALKDQLE) are a coiled coil. A helical transmembrane segment spans residues 155-175 (IGTSLLGSIGVAVLSLGIDMI). A coiled-coil region spans residues 182–209 (AVERTQLQAAIKSYEKHLEEFKAASAKY).

The protein localises to the membrane. This Mus musculus (Mouse) protein is Single-pass membrane and coiled-coil domain-containing protein 3 (Smco3).